The chain runs to 411 residues: UPF0761 membrane protein PA14_51960 (411 aa).

The next 6 membrane-spanning stretches (helical) occupy residues 36 to 56, 92 to 112, 132 to 152, 174 to 194, 207 to 229, and 244 to 264; these read LFAVVPMMTVMFSMLSLIPAF, HLTWVGVVFLAVTAFTMLVTI, FLLYWAILSLGPLLLGAGFAV, LLGLMPLAFSVAAFTLLYSAV, GGVFTAVLFEAAKTLFGLYVSLF, and IFLLWIYLSWMIVLFGAVLVC.

This sequence belongs to the UPF0761 family.

The protein resides in the cell inner membrane. The chain is UPF0761 membrane protein PA14_51960 from Pseudomonas aeruginosa (strain UCBPP-PA14).